A 928-amino-acid chain; its full sequence is Outer membrane protein SlpA (928 aa).

The N-terminal stretch at 1–23 is a signal peptide; sequence MKKRLVTLLAGLLTVLSMGFGLA. The SLH domain maps to 24-84; it reads QFSDVPAGHW…QQIEEELKTQ (61 aa).

As to quaternary structure, homotrimer.

The protein localises to the cell outer membrane. Plays an important role in the structural organization and integrity of the cell envelope, bridging the outer membrane to the peptidoglyan layer. Appears to be a nonselective channel. This Thermus thermophilus (strain ATCC 27634 / DSM 579 / HB8) protein is Outer membrane protein SlpA (slpA).